The chain runs to 207 residues: Holliday junction resolvase RecU (207 aa).

The tract at residues 1–30 (MPIRYPNGQPYSRSPKQGQAKKPLPADTYS) is disordered. T87, D89, E102, and Q121 together coordinate Mg(2+).

It belongs to the RecU family. Mg(2+) is required as a cofactor.

It localises to the cytoplasm. The enzyme catalyses Endonucleolytic cleavage at a junction such as a reciprocal single-stranded crossover between two homologous DNA duplexes (Holliday junction).. Endonuclease that resolves Holliday junction intermediates in genetic recombination. Cleaves mobile four-strand junctions by introducing symmetrical nicks in paired strands. Promotes annealing of linear ssDNA with homologous dsDNA. Required for DNA repair, homologous recombination and chromosome segregation. In Shouchella clausii (strain KSM-K16) (Alkalihalobacillus clausii), this protein is Holliday junction resolvase RecU.